The following is a 369-amino-acid chain: MRN complex-interacting protein (369 aa).

Ser115 carries the phosphoserine modification. Disordered stretches follow at residues 122-150 (GGGV…PRKR), 209-245 (PSFT…PCPA), and 282-317 (AQAE…TPMP). A Nuclear localization signal (NLS) motif is present at residues 148–151 (RKRK). Residues 221–230 (KGRESSREDL) are compositionally biased toward basic and acidic residues. Residues 223–259 (RESSREDLDTMELVPRGEPPCPAQQVRTMSKWEQCLG) are necessary for the association with the MRN complex.

Belongs to the MRNIP family. In terms of assembly, associates with the MRE11-RAD50-NBN (MRN) damage-sensing complex; this association is constitutive. Interacts with MRE11. Interacts with NBN. Interacts with RAD50. Post-translationally, phosphorylated; phosphorylation is constitutive and occurs in the absence of any DNA-damaging stimulus. Phosphorylation on Ser-115 is necessary for its nuclear retention.

It is found in the nucleus. It localises to the nucleoplasm. Its function is as follows. Plays a role in the cellular response to DNA damage and the maintenance of genome stability through its association with the MRN damage-sensing complex. Promotes chromatin loading and activity of the MRN complex to facilitate subsequent ATM-mediated DNA damage response signaling and DNA repair. The sequence is that of MRN complex-interacting protein from Bos taurus (Bovine).